Here is a 63-residue protein sequence, read N- to C-terminus: Large ribosomal subunit protein uL29 (63 aa).

The protein belongs to the universal ribosomal protein uL29 family.

The chain is Large ribosomal subunit protein uL29 from Photorhabdus laumondii subsp. laumondii (strain DSM 15139 / CIP 105565 / TT01) (Photorhabdus luminescens subsp. laumondii).